The primary structure comprises 509 residues: Aspartyl/glutamyl-tRNA(Asn/Gln) amidotransferase subunit B (509 aa).

The protein belongs to the GatB/GatE family. GatB subfamily. In terms of assembly, heterotrimer of A, B and C subunits.

The catalysed reaction is L-glutamyl-tRNA(Gln) + L-glutamine + ATP + H2O = L-glutaminyl-tRNA(Gln) + L-glutamate + ADP + phosphate + H(+). It carries out the reaction L-aspartyl-tRNA(Asn) + L-glutamine + ATP + H2O = L-asparaginyl-tRNA(Asn) + L-glutamate + ADP + phosphate + 2 H(+). Functionally, allows the formation of correctly charged Asn-tRNA(Asn) or Gln-tRNA(Gln) through the transamidation of misacylated Asp-tRNA(Asn) or Glu-tRNA(Gln) in organisms which lack either or both of asparaginyl-tRNA or glutaminyl-tRNA synthetases. The reaction takes place in the presence of glutamine and ATP through an activated phospho-Asp-tRNA(Asn) or phospho-Glu-tRNA(Gln). The protein is Aspartyl/glutamyl-tRNA(Asn/Gln) amidotransferase subunit B of Psychrobacter arcticus (strain DSM 17307 / VKM B-2377 / 273-4).